A 79-amino-acid chain; its full sequence is uncharacterized protein (79 aa).

The signal sequence occupies residues 1 to 19 (MKYVALAFVLSLVILQISA).

Nacreous layer of shell (at protein level). Expressed primarily in the mantle with highest level in the mantle pallium and lower level in the mantle edge.

The protein resides in the secreted. This is an uncharacterized protein from Pinctada maxima (Silver-lipped pearl oyster).